The following is a 302-amino-acid chain: uncharacterized protein (302 aa).

Functionally, may be a membrane-bound protein, possibly involved in IAA or IAA-Lysine transport. This is an uncharacterized protein from Pseudomonas savastanoi (Pseudomonas syringae pv. savastanoi).